A 535-amino-acid chain; its full sequence is E3 ubiquitin-protein ligase rnf168 (535 aa).

The RING-type zinc finger occupies 16 to 55 (CPICQEILLEPVTLPCKHTLCNPCFQMTVEKASLCCPFCR). Residues 112-130 (LCKPGEIRQEYEAEVSKIE) carry the LR motif 1 motif. Residues 145 to 153 (EDYIQKLLA) carry the UMI motif motif. 2 short sequence motifs (MIU motif) span residues 170–193 (IEEQ…LSNA) and 406–429 (RRKQ…KELK). The span at 429 to 443 (KQVNRGKGSPDEYQL) shows a compositional bias: basic and acidic residues. A disordered region spans residues 429–535 (KQVNRGKGSP…LDLFQRSAGK (107 aa)). The LR motif 2 signature appears at 433–444 (RGKGSPDEYQLR). Polar residues-rich tracts occupy residues 462-478 (NEQT…QSGY) and 492-507 (ITSS…TNTE).

Belongs to the RNF168 family. In terms of assembly, monomer.

Its subcellular location is the nucleus. It carries out the reaction S-ubiquitinyl-[E2 ubiquitin-conjugating enzyme]-L-cysteine + [acceptor protein]-L-lysine = [E2 ubiquitin-conjugating enzyme]-L-cysteine + N(6)-ubiquitinyl-[acceptor protein]-L-lysine.. The protein operates within protein modification; protein ubiquitination. E3 ubiquitin-protein ligase required for accumulation of repair proteins to sites of DNA damage. Acts with ube2n/ubc13 to amplify the rnf8-dependent histone ubiquitination. Recruited to sites of DNA damage at double-strand breaks (DSBs) by binding to ubiquitinated histone H2A and ubiquitinates histone H2A and H2AX, leading to amplify the rnf8-dependent H2A ubiquitination and promoting the formation of 'Lys-63'-linked ubiquitin conjugates. This leads to concentrate ubiquitinated histones H2A and H2AX at DNA lesions to the threshold required for recruitment of tp53bp1 and brca1. Catalyzes monoubiquitination of 'Lys-13' and 'Lys-15' of nucleosomal histone H2A (H2AK13Ub and H2AK15Ub, respectively). The chain is E3 ubiquitin-protein ligase rnf168 from Xenopus tropicalis (Western clawed frog).